Consider the following 210-residue polypeptide: UPF0301 protein OCAR_7326/OCA5_c07920 (210 aa).

Belongs to the UPF0301 (AlgH) family.

In Afipia carboxidovorans (strain ATCC 49405 / DSM 1227 / KCTC 32145 / OM5) (Oligotropha carboxidovorans), this protein is UPF0301 protein OCAR_7326/OCA5_c07920.